Consider the following 529-residue polypeptide: Bifunctional purine biosynthesis protein PurH (529 aa).

The region spanning 1 to 148 (MQQRRPVRRA…KNHKDVAIVV (148 aa)) is the MGS-like domain. Residue Lys287 is modified to N6-acetyllysine.

It belongs to the PurH family.

The catalysed reaction is (6R)-10-formyltetrahydrofolate + 5-amino-1-(5-phospho-beta-D-ribosyl)imidazole-4-carboxamide = 5-formamido-1-(5-phospho-D-ribosyl)imidazole-4-carboxamide + (6S)-5,6,7,8-tetrahydrofolate. It carries out the reaction IMP + H2O = 5-formamido-1-(5-phospho-D-ribosyl)imidazole-4-carboxamide. It participates in purine metabolism; IMP biosynthesis via de novo pathway; 5-formamido-1-(5-phospho-D-ribosyl)imidazole-4-carboxamide from 5-amino-1-(5-phospho-D-ribosyl)imidazole-4-carboxamide (10-formyl THF route): step 1/1. Its pathway is purine metabolism; IMP biosynthesis via de novo pathway; IMP from 5-formamido-1-(5-phospho-D-ribosyl)imidazole-4-carboxamide: step 1/1. This chain is Bifunctional purine biosynthesis protein PurH, found in Escherichia coli O127:H6 (strain E2348/69 / EPEC).